We begin with the raw amino-acid sequence, 324 residues long: Phospho-N-acetylmuramoyl-pentapeptide-transferase (324 aa).

10 helical membrane passes run 5-25 (IIVIAMAVSFLITVILSPLFI), 52-72 (PTMGGIMILLSIIATTVWVTA), 76-96 (VLSAGTYLLLFVTIGYGVLGF), 117-137 (FIGQLIIAVIFFFVYRQSGFS), 147-167 (WSFDLGWAYGVLLLFMLVGGS), 176-196 (LDGLLAGTAAIAFGAYAVLAW), 203-223 (VAVFCVAVVGAVLGFLVFNAH), 227-247 (VFMGDTGSLALGGAIAAVAVL), 250-270 (LELLLVVIGGVFVIETLSVII), and 302-322 (IVVTFWAVGLLFAMLGIYIEV).

This sequence belongs to the glycosyltransferase 4 family. MraY subfamily. The cofactor is Mg(2+).

Its subcellular location is the cell membrane. The catalysed reaction is UDP-N-acetyl-alpha-D-muramoyl-L-alanyl-gamma-D-glutamyl-meso-2,6-diaminopimeloyl-D-alanyl-D-alanine + di-trans,octa-cis-undecaprenyl phosphate = di-trans,octa-cis-undecaprenyl diphospho-N-acetyl-alpha-D-muramoyl-L-alanyl-D-glutamyl-meso-2,6-diaminopimeloyl-D-alanyl-D-alanine + UMP. The protein operates within cell wall biogenesis; peptidoglycan biosynthesis. Functionally, catalyzes the initial step of the lipid cycle reactions in the biosynthesis of the cell wall peptidoglycan: transfers peptidoglycan precursor phospho-MurNAc-pentapeptide from UDP-MurNAc-pentapeptide onto the lipid carrier undecaprenyl phosphate, yielding undecaprenyl-pyrophosphoryl-MurNAc-pentapeptide, known as lipid I. The sequence is that of Phospho-N-acetylmuramoyl-pentapeptide-transferase from Geobacillus thermodenitrificans (strain NG80-2).